The chain runs to 86 residues: Exodeoxyribonuclease 7 small subunit (86 aa).

Residues 1-26 are disordered; sequence MQDELFETEKAPQKNTKNAKNAPKKS.

It belongs to the XseB family. In terms of assembly, heterooligomer composed of large and small subunits.

It localises to the cytoplasm. It catalyses the reaction Exonucleolytic cleavage in either 5'- to 3'- or 3'- to 5'-direction to yield nucleoside 5'-phosphates.. Its function is as follows. Bidirectionally degrades single-stranded DNA into large acid-insoluble oligonucleotides, which are then degraded further into small acid-soluble oligonucleotides. This is Exodeoxyribonuclease 7 small subunit from Helicobacter pylori (strain HPAG1).